The sequence spans 512 residues: Alpha-amylase (512 aa).

An N-terminal signal peptide occupies residues Met-1–Ala-29. Residues Asn-133, Asp-190, Ala-210, Asp-212, Asp-223, Asp-229, Asp-231, and Asp-233 each contribute to the Ca(2+) site. A Na(+)-binding site is contributed by Asp-190. Residues Asp-212, Asp-223, and Asp-229 each coordinate Na(+). The Nucleophile role is filled by Asp-260. Residue His-264 participates in Ca(2+) binding. The active-site Proton donor is Glu-290. The Ca(2+) site is built by Gly-329, Tyr-331, His-435, Asp-436, and Asp-459.

It belongs to the glycosyl hydrolase 13 family. Monomer. The cofactor is Ca(2+). Na(+) serves as cofactor.

It localises to the secreted. It catalyses the reaction Endohydrolysis of (1-&gt;4)-alpha-D-glucosidic linkages in polysaccharides containing three or more (1-&gt;4)-alpha-linked D-glucose units.. This chain is Alpha-amylase (amyS), found in Bacillus licheniformis.